Here is a 181-residue protein sequence, read N- to C-terminus: Adenine phosphoribosyltransferase (181 aa).

The protein belongs to the purine/pyrimidine phosphoribosyltransferase family. As to quaternary structure, homodimer.

The protein localises to the cytoplasm. It catalyses the reaction AMP + diphosphate = 5-phospho-alpha-D-ribose 1-diphosphate + adenine. Its pathway is purine metabolism; AMP biosynthesis via salvage pathway; AMP from adenine: step 1/1. Its function is as follows. Catalyzes a salvage reaction resulting in the formation of AMP, that is energically less costly than de novo synthesis. This Cytophaga hutchinsonii (strain ATCC 33406 / DSM 1761 / CIP 103989 / NBRC 15051 / NCIMB 9469 / D465) protein is Adenine phosphoribosyltransferase.